Here is a 114-residue protein sequence, read N- to C-terminus: Tyrosine-protein phosphatase 13 (114 aa).

One can recognise a Tyrosine-protein phosphatase domain in the interval 1–114; the sequence is WRMLWEHNST…QFGQEGPITI (114 aa). Residue glutamate 82 coordinates substrate.

The protein belongs to the protein-tyrosine phosphatase family.

The catalysed reaction is O-phospho-L-tyrosyl-[protein] + H2O = L-tyrosyl-[protein] + phosphate. The chain is Tyrosine-protein phosphatase 13 (STY-13) from Styela plicata (Wrinkled sea squirt).